A 501-amino-acid chain; its full sequence is Sucrose transport protein SUT2 (501 aa).

Topologically, residues 1–31 (MPRRPSGGGGGAGPAAAAVRKVPLRKLLRAA) are cytoplasmic. A helical membrane pass occupies residues 32 to 52 (SVACGVQFGWALQLSLLTPYV). Topologically, residues 53–55 (QEL) are extracellular. The helical transmembrane segment at 56-76 (GIPHAFASLVWLCGPLSGLLV) threads the bilayer. The Cytoplasmic segment spans residues 77-98 (QPLVGHLSDRIAPAASPLGRRR). A helical transmembrane segment spans residues 99 to 119 (PFIAAGAASIAAAVLTVGFSA). Residues 120 to 135 (DLGRIFGDSITPGSTR) are Extracellular-facing. The helical transmembrane segment at 136–156 (LGAIIVYLVGFWLLDVGNNAT) threads the bilayer. At 157–176 (QGPCRAFLADLTENDPRRTR) the chain is on the cytoplasmic side. The chain crosses the membrane as a helical span at residues 177–197 (IANAYFSLFMALGNILGYATG). Over 198–222 (AYSGWYKIFPFTVTPSCSISCANLK) the chain is Extracellular. The chain crosses the membrane as a helical span at residues 223 to 243 (SAFLLDIIILVVTTCITVASV). The Cytoplasmic portion of the chain corresponds to 244–278 (QEPQSFGSDEADHPSTEQEAFLWELFGSFRYFTLP). The helical transmembrane segment at 279 to 299 (VWMVLIVTALTWIGWFPFILF) threads the bilayer. The Extracellular portion of the chain corresponds to 300-327 (DTDWMGREIYRGSPDDPSITQSYHDGVR). The chain crosses the membrane as a helical span at residues 328–348 (MGSFGLMLNSVLLGFTSIVLE). Topologically, residues 349–356 (KLCRKWGA) are cytoplasmic. A helical transmembrane segment spans residues 357–377 (GLVWGVSNILMALCFVAMLVI). Topologically, residues 378–394 (TYVAKNMDYPPSGVPPT) are extracellular. A helical transmembrane segment spans residues 395-415 (GIVIASLVVFTILGAPLAITY). Over 416–433 (SIPYAMAASRVENLGLGQ) the chain is Cytoplasmic. Residues 434-454 (GLAMGILNLAIVIPQVIVSLG) traverse the membrane as a helical segment. Residues 455 to 467 (SGPWDQLFGGGNA) are Extracellular-facing. The chain crosses the membrane as a helical span at residues 468–488 (PAFAVAAAASFIGGLVAILGL). The Cytoplasmic portion of the chain corresponds to 489–501 (PRARIASRRRGHR).

Belongs to the glycoside-pentoside-hexuronide (GPH) cation symporter transporter (TC 2.A.2.4) family. As to quaternary structure, homodimer. In terms of tissue distribution, widely expressed.

It localises to the cell membrane. It functions in the pathway glycan biosynthesis; sucrose metabolism. Its function is as follows. Responsible for the transport of sucrose into the cell, with the concomitant uptake of protons (symport system). May also transport other glucosides. The protein is Sucrose transport protein SUT2 (SUT2) of Oryza sativa subsp. japonica (Rice).